The chain runs to 534 residues: Beta-1,2-xylosyltransferase (534 aa).

Residues 1-11 (MSKRNPKILKI) are Cytoplasmic-facing. The chain crosses the membrane as a helical; Signal-anchor for type II membrane protein span at residues 12 to 34 (FLYMLLLNSLFLIIYFVFHSSSF). The Lumenal segment spans residues 35 to 534 (SPEQSQPPHI…LTEIMKSLGC (500 aa)). Residues Asn-51, Asn-301, and Asn-479 are each glycosylated (N-linked (GlcNAc...) asparagine).

Glycosylation at least at one of the two sites Asn-51 and Asn-301 is necessary for enzyme stability and activity.

It is found in the golgi apparatus membrane. The enzyme catalyses N(4)-{beta-D-GlcNAc-(1-&gt;2)-alpha-D-Man-(1-&gt;3)-[beta-D-GlcNAc-(1-&gt;2)-alpha-D-Man-(1-&gt;6)]-beta-D-Man-(1-&gt;4)-beta-D-GlcNAc-(1-&gt;4)-beta-D-GlcNAc}-L-asparaginyl-[protein] + UDP-alpha-D-xylose = N(4)-{beta-D-GlcNAc-(1-&gt;2)-alpha-D-Man-(1-&gt;3)-[beta-D-GlcNAc-(1-&gt;2)-alpha-D-Man-(1-&gt;6)]-[beta-D-Xyl-(1-&gt;2)]-beta-D-Man-(1-&gt;4)-beta-D-GlcNAc-(1-&gt;4)-beta-D-GlcNAc}-L-asparaginyl-[protein] + UDP + H(+). The protein operates within protein modification; protein glycosylation. Its function is as follows. Glycosyltransferase involved in the xylosylation of N-glycans. Possesses beta-1,2-xylosyltransferase activity, transferring xylose from UDP-xylose to the core beta-linked mannose of N-glycans. Involved in the biosynthesis of glycoprotein bound N-glycans. Does not require metal ions for its activity. The chain is Beta-1,2-xylosyltransferase from Arabidopsis thaliana (Mouse-ear cress).